Here is a 361-residue protein sequence, read N- to C-terminus: Probable dual-specificity RNA methyltransferase RlmN (361 aa).

The Proton acceptor role is filled by Glu-91. Residues 97–329 (QHYGLSVCVT…KKKGVNCVVR (233 aa)) form the Radical SAM core domain. Cysteines 104 and 340 form a disulfide. Residues Cys-111, Cys-115, and Cys-118 each coordinate [4Fe-4S] cluster. Residues 163 to 164 (GE), Ser-195, 218 to 220 (SLH), and Asn-296 contribute to the S-adenosyl-L-methionine site. Residue Cys-340 is the S-methylcysteine intermediate of the active site.

Belongs to the radical SAM superfamily. RlmN family. Requires [4Fe-4S] cluster as cofactor.

The protein localises to the cytoplasm. It catalyses the reaction adenosine(2503) in 23S rRNA + 2 reduced [2Fe-2S]-[ferredoxin] + 2 S-adenosyl-L-methionine = 2-methyladenosine(2503) in 23S rRNA + 5'-deoxyadenosine + L-methionine + 2 oxidized [2Fe-2S]-[ferredoxin] + S-adenosyl-L-homocysteine. The enzyme catalyses adenosine(37) in tRNA + 2 reduced [2Fe-2S]-[ferredoxin] + 2 S-adenosyl-L-methionine = 2-methyladenosine(37) in tRNA + 5'-deoxyadenosine + L-methionine + 2 oxidized [2Fe-2S]-[ferredoxin] + S-adenosyl-L-homocysteine. Specifically methylates position 2 of adenine 2503 in 23S rRNA and position 2 of adenine 37 in tRNAs. The sequence is that of Probable dual-specificity RNA methyltransferase RlmN from Streptococcus pneumoniae serotype 4 (strain ATCC BAA-334 / TIGR4).